The chain runs to 390 residues: Cell division protein FtsZ (390 aa).

GTP is bound by residues 21–25 (GGGNN), 108–110 (GTG), glutamate 139, arginine 143, and aspartate 187. Residues 315 to 390 (FDDKPTSHGR…EERRSRRTRR (76 aa)) are disordered. The segment covering 326-360 (SGSTGFGTSVNTSSNATSKDESFTSNSSNAQATDS) has biased composition (polar residues). Residues 361-384 (VSERTHTTKEDDIPSFIRNREERR) are compositionally biased toward basic and acidic residues.

The protein belongs to the FtsZ family. As to quaternary structure, homodimer. Polymerizes to form a dynamic ring structure in a strictly GTP-dependent manner. Interacts directly with several other division proteins.

It is found in the cytoplasm. Essential cell division protein that forms a contractile ring structure (Z ring) at the future cell division site. The regulation of the ring assembly controls the timing and the location of cell division. One of the functions of the FtsZ ring is to recruit other cell division proteins to the septum to produce a new cell wall between the dividing cells. Binds GTP and shows GTPase activity. In Staphylococcus aureus (strain NCTC 8325 / PS 47), this protein is Cell division protein FtsZ.